A 208-amino-acid chain; its full sequence is Large ribosomal subunit protein uL3 (208 aa).

An N5-methylglutamine modification is found at glutamine 149.

Belongs to the universal ribosomal protein uL3 family. In terms of assembly, part of the 50S ribosomal subunit. Forms a cluster with proteins L14 and L19. Post-translationally, methylated by PrmB.

Functionally, one of the primary rRNA binding proteins, it binds directly near the 3'-end of the 23S rRNA, where it nucleates assembly of the 50S subunit. The protein is Large ribosomal subunit protein uL3 of Mannheimia succiniciproducens (strain KCTC 0769BP / MBEL55E).